We begin with the raw amino-acid sequence, 722 residues long: Methionine--tRNA ligase (722 aa).

The short motif at 11 to 21 is the 'HIGH' region element; sequence PYANGPIHAGH. Zn(2+) is bound by residues Cys143, Cys146, Cys156, and Cys159. The short motif at 344 to 348 is the 'KMSKS' region element; it reads KFSTS. Thr347 lines the ATP pocket. Positions 622–722 constitute a tRNA-binding domain; the sequence is DFAKLDLRVG…KEVKLGAKVR (101 aa).

Belongs to the class-I aminoacyl-tRNA synthetase family. MetG type 1 subfamily. As to quaternary structure, homodimer. Zn(2+) is required as a cofactor.

The protein localises to the cytoplasm. It catalyses the reaction tRNA(Met) + L-methionine + ATP = L-methionyl-tRNA(Met) + AMP + diphosphate. Its function is as follows. Is required not only for elongation of protein synthesis but also for the initiation of all mRNA translation through initiator tRNA(fMet) aminoacylation. This Pyrococcus abyssi (strain GE5 / Orsay) protein is Methionine--tRNA ligase.